The following is a 215-amino-acid chain: KID-containing protein 1 (215 aa).

Disordered regions lie at residues 1-132 (MAGG…NKKR) and 150-183 (NPKS…GDVL). Over residues 64–81 (DSEEEDEESEEDNDEEEL) the composition is skewed to acidic residues. The Nuclear localization signal signature appears at 129–137 (NKKRRLQIY). The span at 162–175 (DNDDEEGDDGDLSD) shows a compositional bias: acidic residues. The interval 177–204 (ERGGDVLARRPSFKNRALKSMSCFALSD) is kinase-inducible domain (KID). The residue at position 188 (Ser188) is a Phosphoserine; by PKA.

As to quaternary structure, interacts with HDA19; Ser-188 is critical for this interaction. Strongly expressed in stems, flowers, roots and immature siliques, but not detected in leaf blades of seedlings.

It is found in the nucleus. Its function is as follows. Transcription activator which may regulates gene expression through interaction with the histone deacetylase HDA19. This is KID-containing protein 1 from Brassica napus (Rape).